The chain runs to 303 residues: MTDDQDCAAELEKVDSSSEDGVDAKPDRSSIISSILLKKKRNASAGPVRTGRDRVPTYLYRMDFQKMGKCIIINNKNFDKATGMDVRNGTDKDAGALFKCFQNLGFEVTVHNDCSCAKMQDLLRKASEEDHSNSACFACVLLSHGEEDLIYGKDGVTPIKDLTAHFRGDRCKTLLEKPKLFFIQACRGTELDDGIQADSGPINDIDANPRNKIPVEADFLFAYSTVPGYYSWRNPGKGSWFVQALCSILNEHGKDLEIMQILTRVNDRVARHFESQSDDPRFNEKKQIPCMVSMLTKELYFSR.

Methionine 1 carries the post-translational modification N-acetylmethionine. The propeptide occupies 1–23 (MTDDQDCAAELEKVDSSSEDGVD). A disordered region spans residues 1–26 (MTDDQDCAAELEKVDSSSEDGVDAKP). The span at 10–26 (ELEKVDSSSEDGVDAKP) shows a compositional bias: basic and acidic residues. The residue at position 30 (serine 30) is a Phosphoserine. Positions 38–41 (KKKR) are exosite. Residues 76 to 87 (KNFDKATGMDVR) form a loop L1 region. Histidine 144 is an active-site residue. Threonine 173 bears the Phosphothreonine mark. Cysteine 186 is an active-site residue. The tract at residues 187–196 (RGTELDDGIQ) is loop L2. The propeptide occupies 199-206 (SGPINDID). A loop L3 region spans residues 226–238 (VPGYYSWRNPGKG). At serine 239 the chain carries Phosphoserine. The interval 274–288 (ESQSDDPRFNEKKQI) is loop L4.

This sequence belongs to the peptidase C14A family. In terms of assembly, heterotetramer that consists of two anti-parallel arranged heterodimers, each one formed by a 20 kDa (p20) and a 11 kDa (p11) subunit. Interacts with XIAP (via its second BIR domain); inhibiting CASP7 activity. Interacts with BIRC6/bruce. Interacts with ATXN3 (short isoform 1). Interacts with HSPA5. Post-translationally, cleavage by different proteases, such as granzyme B (GZMB), caspase-1 (CASP1), caspase-8 (CASP8) or caspase-9 (CASP9) generate the two active subunits. Its involvement in different programmed cell death processes is probably specified by the protease that activates CASP7. Cleaved and activated by initiator caspases (CASP8 and/or CASP9), leading to execution phase of apoptosis. Cleavage and maturation by GZMB regulates granzyme-mediated programmed cell death. Cleaved and activated by CASP1 in response to bacterial infection. Propeptide domains can also be cleaved efficiently by CASP3. Active heterodimers between the small subunit of caspase-7 and the large subunit of CASP3, and vice versa, also occur. Also cleaved at the N-terminus at alternative sites by CAPN1, leading to its activation. In terms of processing, phosphorylation at Ser-30 and Ser-239 by PAK2 inhibits its activity. Phosphorylation at Ser-30 prevents cleavage and activation by initiator caspase CASP9, while phosphorylation at Ser-239 prevents thiol protease activity by preventing substrate-binding. Ubiquitinated by BIRC6; this activity is inhibited by DIABLO/SMAC. In terms of tissue distribution, highly expressed in heart, lung, liver and kidney. Low levels in spleen, skeletal muscle and testis. No expression in the brain.

It is found in the cytoplasm. Its subcellular location is the cytosol. The protein resides in the nucleus. The protein localises to the secreted. It localises to the extracellular space. The enzyme catalyses Strict requirement for an Asp residue at position P1 and has a preferred cleavage sequence of Asp-Glu-Val-Asp-|-.. With respect to regulation, during activation, the N-terminal disordered prodomain is removed by cleavage. Concomitantly, double cleavage gives rise to a large Caspase-7 subunit p20 and a small Caspase-7 subunit p11. The two large and two small subunits then assemble to form the active CASP7 complex. Can be cleaved and activated by different caspases, depending on the context. Cleaved and activated by initiator caspases (CASP8 and/or CASP9), leading to execution phase of apoptosis. Cleavage and maturation by GZMB regulates granzyme-mediated programmed cell death. Cleavage and maturation by CASP1 regulates pyroptosis. Inhibited by XIAP, which directly binds to the active site pocket and obstructs substrate entry. Phosphorylation at Ser-30 and Ser-239 by PAK2 inhibits its activity. Inhibited by BIRC6; following inhibition of BIRC6-caspase binding by DIABLO/SMAC, BIRC6 is subjected to caspase cleavage, leading to an increase in active caspases. Thiol protease involved in different programmed cell death processes, such as apoptosis, pyroptosis or granzyme-mediated programmed cell death, by proteolytically cleaving target proteins. Has a marked preference for Asp-Glu-Val-Asp (DEVD) consensus sequences, with some plasticity for alternate non-canonical sequences. Its involvement in the different programmed cell death processes is probably determined by upstream proteases that activate CASP7. Acts as an effector caspase involved in the execution phase of apoptosis: following cleavage and activation by initiator caspases (CASP8 and/or CASP9), mediates execution of apoptosis by catalyzing cleavage of proteins, such as CLSPN, PARP1, PTGES3 and YY1. Compared to CASP3, acts as a minor executioner caspase and cleaves a limited set of target proteins. Acts as a key regulator of the inflammatory response in response to bacterial infection by catalyzing cleavage and activation of the sphingomyelin phosphodiesterase SMPD1 in the extracellular milieu, thereby promoting membrane repair. Regulates pyroptosis in intestinal epithelial cells: cleaved and activated by CASP1 in response to S.typhimurium infection, promoting its secretion to the extracellular milieu, where it catalyzes activation of SMPD1, generating ceramides that repair membranes and counteract the action of gasdermin-D (GSDMD) pores. Regulates granzyme-mediated programmed cell death in hepatocytes: cleaved and activated by granzyme B (GZMB) in response to bacterial infection, promoting its secretion to the extracellular milieu, where it catalyzes activation of SMPD1, generating ceramides that repair membranes and counteract the action of perforin (PRF1) pores. Following cleavage by CASP1 in response to inflammasome activation, catalyzes processing and inactivation of PARP1, alleviating the transcription repressor activity of PARP1. Acts as an inhibitor of type I interferon production during virus-induced apoptosis by mediating cleavage of antiviral proteins CGAS, IRF3 and MAVS, thereby preventing cytokine overproduction. Cleaves and activates sterol regulatory element binding proteins (SREBPs). Cleaves phospholipid scramblase proteins XKR4, XKR8 and XKR9. Cleaves BIRC6 following inhibition of BIRC6-caspase binding by DIABLO/SMAC. This chain is Caspase-7, found in Mus musculus (Mouse).